A 182-amino-acid chain; its full sequence is Crossover junction endodeoxyribonuclease RuvC (182 aa).

Catalysis depends on residues D7, E69, and D141. Residues D7, E69, and D141 each contribute to the Mg(2+) site.

Belongs to the RuvC family. Homodimer which binds Holliday junction (HJ) DNA. The HJ becomes 2-fold symmetrical on binding to RuvC with unstacked arms; it has a different conformation from HJ DNA in complex with RuvA. In the full resolvosome a probable DNA-RuvA(4)-RuvB(12)-RuvC(2) complex forms which resolves the HJ. The cofactor is Mg(2+).

It localises to the cytoplasm. The catalysed reaction is Endonucleolytic cleavage at a junction such as a reciprocal single-stranded crossover between two homologous DNA duplexes (Holliday junction).. The RuvA-RuvB-RuvC complex processes Holliday junction (HJ) DNA during genetic recombination and DNA repair. Endonuclease that resolves HJ intermediates. Cleaves cruciform DNA by making single-stranded nicks across the HJ at symmetrical positions within the homologous arms, yielding a 5'-phosphate and a 3'-hydroxyl group; requires a central core of homology in the junction. The consensus cleavage sequence is 5'-(A/T)TT(C/G)-3'. Cleavage occurs on the 3'-side of the TT dinucleotide at the point of strand exchange. HJ branch migration catalyzed by RuvA-RuvB allows RuvC to scan DNA until it finds its consensus sequence, where it cleaves and resolves the cruciform DNA. The protein is Crossover junction endodeoxyribonuclease RuvC of Polaromonas naphthalenivorans (strain CJ2).